The primary structure comprises 87 residues: Acylphosphatase (87 aa).

The region spanning 2-87 (RLTALVSGTV…ATGLRDFHVY (86 aa)) is the Acylphosphatase-like domain. Residues R17 and N35 contribute to the active site.

Belongs to the acylphosphatase family.

The catalysed reaction is an acyl phosphate + H2O = a carboxylate + phosphate + H(+). The polypeptide is Acylphosphatase (acyP) (Deinococcus geothermalis (strain DSM 11300 / CIP 105573 / AG-3a)).